The following is a 176-amino-acid chain: MSSSSPINENDNGNIENNNETNITENGDNGESIDKKDDNIVLPYENDEEEANYLRFIMELEFIQCLSNPRYLNYLAQNRYFQDKAFVNYLVYLQYWKKPEYAKFIVYPQSLYFLDLLQEERFRQELNHSQSTDFIHEQQFYHWQYYRNNRMSIKEQELQQQQQQQQQQQVQPPTTV.

A disordered region spans residues 1–38 (MSSSSPINENDNGNIENNNETNITENGDNGESIDKKDD). Low complexity predominate over residues 7-30 (INENDNGNIENNNETNITENGDNG).

It belongs to the Mediator complex subunit 31 family. As to quaternary structure, component of the Mediator complex.

The protein localises to the nucleus. In terms of biological role, component of the Mediator complex, a coactivator involved in the regulated transcription of nearly all RNA polymerase II-dependent genes. Mediator functions as a bridge to convey information from gene-specific regulatory proteins to the basal RNA polymerase II transcription machinery. Mediator is recruited to promoters by direct interactions with regulatory proteins and serves as a scaffold for the assembly of a functional preinitiation complex with RNA polymerase II and the general transcription factors. The protein is Putative mediator of RNA polymerase II transcription subunit 31 (med31) of Dictyostelium discoideum (Social amoeba).